The primary structure comprises 237 residues: dTDP-3-amino-3,4,6-trideoxy-alpha-D-glucopyranose N,N-dimethyltransferase (237 aa).

Positions 14 and 17 each coordinate substrate. S-adenosyl-L-methionine contacts are provided by residues Tyr21, Ala46, Glu67, 89–90 (DM), and Met105. Residues 145–147 (TFA), Ser152, 165–169 (RVSHS), and Arg229 each bind substrate.

The protein belongs to the methyltransferase TylM1/DesVI family. As to quaternary structure, homodimer.

It catalyses the reaction dTDP-3-amino-3,4,6-trideoxy-alpha-D-glucose + 2 S-adenosyl-L-methionine = dTDP-alpha-D-desosamine + 2 S-adenosyl-L-homocysteine + 2 H(+). It participates in antibiotic biosynthesis. S-adenosyl-L-methionine-dependent methyltransferase involved in the biosynthesis of desosamine, found in certain macrolide antibiotics such as erthyromycin, azithromycin, clarithromycin, and methymycin. Catalyzes the last step in the biosynthesis of dTDP-desosamine, i.e. the N,N-dimethylation of the 3-amino group of dTDP-3-amino-3,4,6-trideoxy-alpha-D-glucose. This Streptomyces venezuelae protein is dTDP-3-amino-3,4,6-trideoxy-alpha-D-glucopyranose N,N-dimethyltransferase.